The primary structure comprises 186 residues: Elongation factor P (186 aa).

The protein belongs to the elongation factor P family.

Its subcellular location is the cytoplasm. It participates in protein biosynthesis; polypeptide chain elongation. In terms of biological role, involved in peptide bond synthesis. Stimulates efficient translation and peptide-bond synthesis on native or reconstituted 70S ribosomes in vitro. Probably functions indirectly by altering the affinity of the ribosome for aminoacyl-tRNA, thus increasing their reactivity as acceptors for peptidyl transferase. The polypeptide is Elongation factor P (Shewanella frigidimarina (strain NCIMB 400)).